The following is a 52-amino-acid chain: uncharacterized protein (52 aa).

The chain crosses the membrane as a helical span at residues 7–27 (MFQLFVFIIFAAVVFAAVTGF).

The protein localises to the membrane. This is an uncharacterized protein from Bacillus subtilis (strain 168).